The primary structure comprises 186 residues: Ribosome maturation factor RimP (186 aa).

This sequence belongs to the RimP family.

It is found in the cytoplasm. In terms of biological role, required for maturation of 30S ribosomal subunits. This is Ribosome maturation factor RimP from Rhizorhabdus wittichii (strain DSM 6014 / CCUG 31198 / JCM 15750 / NBRC 105917 / EY 4224 / RW1) (Sphingomonas wittichii).